The chain runs to 44 residues: uncharacterized protein (44 aa).

Residues 4–24 (ISSILIRGGGVLIVVILLLWI) form a helical membrane-spanning segment.

The protein resides in the membrane. This is an uncharacterized protein from Ornithodoros (relapsing fever ticks).